The chain runs to 352 residues: Cyclin-O (352 aa).

Residues 1–40 (MVTPCPASPGSPAAGAGRRDSHQNLRAPVKKSRRPCLRRK) form a disordered region. The span at 28-40 (PVKKSRRPCLRRK) shows a compositional bias: basic residues. Phosphoserine is present on Ser83.

Belongs to the cyclin family. Present in respiratory cells (at protein level). Expressed in multiciliated tissue in brain and fallopian tube (at protein level). Highly expressed in oocytes.

Its subcellular location is the cytoplasm. The protein resides in the nucleus. It is found in the nucleolus. Specifically required for generation of multiciliated cells, possibly by promoting a cell cycle state compatible with centriole amplification and maturation. Acts downstream of MCIDAS to promote mother centriole amplification and maturation in preparation for apical docking. May be involved in apoptosis in lymphoid cells; however, this result requires additional evidences in vivo. May be involved in oocyte meiotic resumption in oocytes. The protein is Cyclin-O of Mus musculus (Mouse).